A 176-amino-acid chain; its full sequence is MKTKEIVDGVTMKRAITRMTYEIIERNKNLDNIVLAGIKTRGVFIARRIQERLKQIEGLDVPLGELDTKSFRDDVKVEENTTEMPVDITNRDVILVDDVLYTGRTIRAAIDNIVNLGRPARVSLAVLVDRGHRELPIRADYVGKNIPTSSSEEIVVNMVEIDDKDNVLLLAKEDSL.

The PRPP-binding motif lies at 93–105; it reads VILVDDVLYTGRT.

This sequence belongs to the purine/pyrimidine phosphoribosyltransferase family. PyrR subfamily. In terms of assembly, homodimer and homohexamer; in equilibrium.

It catalyses the reaction UMP + diphosphate = 5-phospho-alpha-D-ribose 1-diphosphate + uracil. Functionally, regulates transcriptional attenuation of the pyrimidine nucleotide (pyr) operon by binding in a uridine-dependent manner to specific sites on pyr mRNA. This disrupts an antiterminator hairpin in the RNA and favors formation of a downstream transcription terminator, leading to a reduced expression of downstream genes. In terms of biological role, also displays a weak uracil phosphoribosyltransferase activity which is not physiologically significant. In Streptococcus mutans serotype c (strain ATCC 700610 / UA159), this protein is Bifunctional protein PyrR.